Reading from the N-terminus, the 343-residue chain is UDP-3-O-acylglucosamine N-acyltransferase (343 aa).

His237 functions as the Proton acceptor in the catalytic mechanism.

Belongs to the transferase hexapeptide repeat family. LpxD subfamily. Homotrimer.

The catalysed reaction is a UDP-3-O-[(3R)-3-hydroxyacyl]-alpha-D-glucosamine + a (3R)-hydroxyacyl-[ACP] = a UDP-2-N,3-O-bis[(3R)-3-hydroxyacyl]-alpha-D-glucosamine + holo-[ACP] + H(+). The protein operates within bacterial outer membrane biogenesis; LPS lipid A biosynthesis. Functionally, catalyzes the N-acylation of UDP-3-O-acylglucosamine using 3-hydroxyacyl-ACP as the acyl donor. Is involved in the biosynthesis of lipid A, a phosphorylated glycolipid that anchors the lipopolysaccharide to the outer membrane of the cell. The protein is UDP-3-O-acylglucosamine N-acyltransferase of Synechococcus sp. (strain JA-3-3Ab) (Cyanobacteria bacterium Yellowstone A-Prime).